A 247-amino-acid chain; its full sequence is E3 ubiquitin-protein ligase RNF182 (247 aa).

The segment at 20-68 (CKICYNRYNLKQRKPKVLECCHRVCAKCLYKIIDFGDSPQGVIVCPFCR) adopts an RING-type zinc-finger fold. Helical transmembrane passes span 184–204 (VLVW…IYLL) and 211–231 (LGVV…VYGF).

As to quaternary structure, interacts with ATP6V0C.

Its subcellular location is the membrane. The protein resides in the cytoplasm. The enzyme catalyses S-ubiquitinyl-[E2 ubiquitin-conjugating enzyme]-L-cysteine + [acceptor protein]-L-lysine = [E2 ubiquitin-conjugating enzyme]-L-cysteine + N(6)-ubiquitinyl-[acceptor protein]-L-lysine.. The protein operates within protein modification; protein ubiquitination. E3 ubiquitin-protein ligase that mediates the ubiquitination of ATP6V0C and targets it to degradation via the ubiquitin-proteasome pathway. Also plays a role in the inhibition of TLR-triggered innate immune response by mediating 'Lys'-48-linked ubiquitination and subsequent degradation of NF-kappa-B component RELA. The sequence is that of E3 ubiquitin-protein ligase RNF182 (Rnf182) from Rattus norvegicus (Rat).